The following is a 203-amino-acid chain: Outer-membrane lipoprotein LolB (203 aa).

The N-terminal stretch at 1-21 (MTGRWSPRLLAGLLAALVLSG) is a signal peptide. Residue Cys-22 is the site of N-palmitoyl cysteine attachment. Cys-22 carries the S-diacylglycerol cysteine lipid modification.

It belongs to the LolB family. As to quaternary structure, monomer.

The protein resides in the cell outer membrane. Functionally, plays a critical role in the incorporation of lipoproteins in the outer membrane after they are released by the LolA protein. The chain is Outer-membrane lipoprotein LolB from Halorhodospira halophila (strain DSM 244 / SL1) (Ectothiorhodospira halophila (strain DSM 244 / SL1)).